We begin with the raw amino-acid sequence, 105 residues long: Small ribosomal subunit protein eS10A (105 aa).

Belongs to the eukaryotic ribosomal protein eS10 family. As to quaternary structure, component of the small ribosomal subunit (SSU). Mature yeast ribosomes consist of a small (40S) and a large (60S) subunit. The 40S small subunit contains 1 molecule of ribosomal RNA (18S rRNA) and 33 different proteins (encoded by 57 genes). The large 60S subunit contains 3 rRNA molecules (25S, 5.8S and 5S rRNA) and 46 different proteins (encoded by 81 genes). eS10 interacts with GCN1 (via middle region); this interaction is direct and promotes GCN2 kinase activity. In terms of processing, the N-terminus is not modified.

It localises to the cytoplasm. In terms of biological role, component of the ribosome, a large ribonucleoprotein complex responsible for the synthesis of proteins in the cell. The small ribosomal subunit (SSU) binds messenger RNAs (mRNAs) and translates the encoded message by selecting cognate aminoacyl-transfer RNA (tRNA) molecules. The large subunit (LSU) contains the ribosomal catalytic site termed the peptidyl transferase center (PTC), which catalyzes the formation of peptide bonds, thereby polymerizing the amino acids delivered by tRNAs into a polypeptide chain. The nascent polypeptides leave the ribosome through a tunnel in the LSU and interact with protein factors that function in enzymatic processing, targeting, and the membrane insertion of nascent chains at the exit of the ribosomal tunnel. eS10 plays a role as a positive regulator of the GCN2 kinase activity by stimulating GCN1-mediated GCN2 activation. The protein is Small ribosomal subunit protein eS10A of Saccharomyces cerevisiae (strain ATCC 204508 / S288c) (Baker's yeast).